The sequence spans 1706 residues: Bifunctional hemolysin/adenylate cyclase (1706 aa).

Residues 1–399 (MQQSHQAGYA…RRPSLGAVER (399 aa)) are a, catalytic. 349-356 (AYGVAGKS) serves as a coordination point for ATP. Residues 367–405 (GVPGGRSKSSPDVLETVPASPGLRRPSLGAVERQDSGYD) are disordered. The interval 400–912 (QDSGYDSLDG…LKHSIKLEVI (513 aa)) is b, Ala/Gly-rich. The interval 500–698 (LSAAVFGLGE…SVVGAPVAVV (199 aa)) is required for interaction with CyaC. N6-palmitoyl lysine attachment occurs at residues K860 and K983. A c region spans residues 913–1656 (GGDGDDVVLA…RDADHRVEAI (744 aa)). 17 Hemolysin-type calcium-binding repeats span residues 1014-1031 (IGGA…DNFL), 1032-1049 (AGGA…NDTL), 1050-1067 (VGGE…DDVF), 1155-1172 (WGDD…DDIL), 1173-1190 (RGGL…NDIF), 1279-1296 (MGQG…DDLL), 1297-1314 (FGGD…NDTL), 1315-1332 (YGGL…NDWF), 1335-1352 (TPAR…VDTV), 1411-1428 (TGDA…ADVL), 1429-1446 (AGGE…DDQL), 1447-1464 (SGDA…DDWF), 1468-1484 (AANA…NDTV), 1537-1554 (IGDA…NDVL), 1555-1572 (SGGA…SDLL), 1573-1590 (SGDA…DDTY), and 1603-1620 (ESGG…ADQL). Positions 1657 to 1706 (HAANQAIDPAGIEKLVEAMAQYPDPGAAAAAPPAARVPDTLMQSLAVNWR) are d, Asp/Gly-rich.

It in the N-terminal section; belongs to the adenylyl cyclase class-2 family. In the C-terminal section; belongs to the RTX prokaryotic toxin family. In terms of processing, released in a processed form. Post-translationally, palmitoylated at Lys-860 and Lys-983 by CyaC. The toxin only becomes active when modified in position Lys-983: palmitoylation is required for efficient membrane insertion and pore formation of the acylated Hemolysin chain.

It localises to the secreted. The protein resides in the host cell membrane. The catalysed reaction is ATP = 3',5'-cyclic AMP + diphosphate. Its activity is regulated as follows. Activated by host calmodulin. Functionally, bifunctional adenylate cyclase toxin-hemolysin that plays a crucial role in host colonization. It causes whooping cough by acting on mammalian cells by elevating cAMP-concentration and thus disrupts normal cell function. Its function is as follows. Adenylate cyclase that is activated by host intracellular calmodulin and catalyzes un-regulated conversion of ATP to cAMP, thereby impairing microbicidal functions of immune effector cells and inducing apoptosis of lung macrophages. In terms of biological role, hemolysin that forms small cation-selective membrane channels, leading to hemolytic activity. The hemolytic activity of CyaA is weak compared with that of the HlyA of E.coli. The polypeptide is Bifunctional hemolysin/adenylate cyclase (cya) (Bordetella bronchiseptica (strain ATCC BAA-588 / NCTC 13252 / RB50) (Alcaligenes bronchisepticus)).